The primary structure comprises 3674 residues: Dystrophin (3674 aa).

An actin-binding region spans residues 1 to 236 (MSEVSSDERE…YVTSLFQVLP (236 aa)). Calponin-homology (CH) domains are found at residues 11–115 (DVQK…LHWQ) and 130–236 (TNSE…QVLP). An ANK2- and ANK-3 binding region spans residues 59–68 (PKEKGSTRVH). Positions 306 to 318 (SDPTRSPFPSQRL) are enriched in polar residues. The disordered stretch occupies residues 306–325 (SDPTRSPFPSQRLESPEDKS). Spectrin repeat units lie at residues 335–443 (VNLD…NLHK), 444–552 (VLMD…LLQD), 555–663 (LKWQ…QISQ), 715–824 (EIRK…WLEY), 826–930 (NRII…ELQI), 939–1041 (RYQE…KLEE), 1044–1150 (AKLR…ALKG), 1153–1259 (DKTI…TLEE), 1262–1363 (ACWH…LLEQ), 1364–1459 (SIQS…LFQK), 1464–1564 (EQRL…QLEK), 1567–1672 (KLSR…LLLE), 1675–1774 (KHME…KASI), 1775–1870 (PLKE…KALE), 1873–1975 (HQWY…TVHE), 1988–2097 (EISY…KFDR), 2100–2204 (EKWR…RLEE), 2207–2314 (NILS…EIEA), 2315–2412 (HIKD…LRAK), 2464–2566 (FNRA…QLNE), 2569–2675 (KDST…VLEE), 2678–2791 (RLLQ…HLEA), 2797–2919 (KRLH…RKID), and 2924–3029 (RLQE…QLHE). The segment at 1411-1909 (SDLTSHEISL…PEPQDEKKIK (499 aa)) is interaction with SYNM. The region spanning 3044–3077 (TSVQGPWERAISPNKVPYYINHETQTTCWDHPKM) is the WW domain. The segment at 3047-3397 (QGPWERAISP…TVLEGDNMET (351 aa)) is interaction with SYNM. The segment at 3297–3353 (KHQAKCNICKECPIIGFRYRSLKHFNYDICQSCFFSGRVAKGHKMHYPMVEYCTPTT) adopts a ZZ-type; degenerate zinc-finger fold. Residues cysteine 3302, cysteine 3305, cysteine 3326, and cysteine 3329 each contribute to the Zn(2+) site. The interval 3455 to 3507 (DDEHLLIQHYCQSLNQDSPLSQPRSPAQILISLESEERGELERILADLEEENR) is binds to SNTB1. Residues serine 3472, serine 3479, and serine 3489 each carry the phosphoserine modification. 2 disordered regions span residues 3517–3543 (KQQH…QSPR) and 3590–3674 (QAEA…EDTM). Polar residues-rich tracts occupy residues 3596–3615 (NGTT…SSQP) and 3651–3662 (QLNNSFPSSRGR). A phosphoserine mark is found at serine 3601, serine 3602, serine 3606, serine 3612, serine 3613, and serine 3655.

In terms of assembly, interacts with SYNM. Interacts with the syntrophins SNTG1 and SNTG2. Interacts with KRT19. Component of the dystrophin-associated glycoprotein complex which is composed of three subcomplexes: a cytoplasmic complex comprised of DMD (or UTRN), DTNA and a number of syntrophins, such as SNTB1, SNTB2, SNTG1 and SNTG2, the transmembrane dystroglycan complex, and the sarcoglycan-sarcospan complex. Interacts with DAG1 (betaDAG1) with DMD; the interaction is inhibited by phosphorylation on the PPXY motif of DAG1. Interacts with SYNM; SNTA1 and SNTB1. Interacts with CMYA5. Directly interacts with ANK2 and ANK3; these interactions do not interfere with betaDAG1-binding and are necessary for proper localization in muscle cells. Identified in a dystroglycan complex that contains at least PRX, DRP2, UTRN, DMD and DAG1. Interacts with DTNB. Interacts with PGM5; the interaction is direct. Interacts with NOS1; localizes NOS1 to sarcolemma in muscle cells. In the retina, expressed in the outer plexiform layer (OPL) and around the blood vessels. Also observed at the vitreal border of the retina corresponding to the inner limiting membrane (ILM). Presynaptically localized in cone pedicles and postsynaptically in bipolar cells (at protein level).

The protein resides in the cell membrane. Its subcellular location is the sarcolemma. The protein localises to the cytoplasm. It is found in the cytoskeleton. It localises to the postsynaptic cell membrane. Functionally, anchors the extracellular matrix to the cytoskeleton via F-actin. Ligand for dystroglycan. Component of the dystrophin-associated glycoprotein complex which accumulates at the neuromuscular junction (NMJ) and at a variety of synapses in the peripheral and central nervous systems and has a structural function in stabilizing the sarcolemma. Also implicated in signaling events and synaptic transmission. The chain is Dystrophin from Sus scrofa (Pig).